A 332-amino-acid polypeptide reads, in one-letter code: Ribosomal RNA small subunit methyltransferase H (332 aa).

Residues 38 to 40, D56, F83, D104, and Q111 contribute to the S-adenosyl-L-methionine site; that span reads GGY. The disordered stretch occupies residues 309–332; it reads TETPFSEDISRPDTHIPRSRRQSA.

The protein belongs to the methyltransferase superfamily. RsmH family.

Its subcellular location is the cytoplasm. The enzyme catalyses cytidine(1402) in 16S rRNA + S-adenosyl-L-methionine = N(4)-methylcytidine(1402) in 16S rRNA + S-adenosyl-L-homocysteine + H(+). Functionally, specifically methylates the N4 position of cytidine in position 1402 (C1402) of 16S rRNA. The sequence is that of Ribosomal RNA small subunit methyltransferase H from Zymomonas mobilis subsp. mobilis (strain ATCC 31821 / ZM4 / CP4).